We begin with the raw amino-acid sequence, 287 residues long: MTMMDMNFKYCHKIMKKHSKSFSYAFDLLPEDQRKAVWAIYAVCRKIDDSIDVYGDIQFLNQIKEDIQSIEKYPYEHHHFQSDRRIMMALQHVAQHKNIAFQSFYNLIDTVYKDQHFTMFETDAELFGYCYGVAGTVGEVLTPILSDHETHQTYDVARRLGESLQLINILRDVGEDFDNERIYFSKQRLKQYEVDIAEVYQNGVNNHYIDLWEYYAAIAEKDFQDVMDQIKVFSIEAQPIIELAARIYIEILDEVRQANYTLHERVFVDKRKKAKLFHEINSKYHRI.

(2E,6E)-farnesyl diphosphate contacts are provided by residues 18–21, Tyr-41, and Arg-45; that span reads HSKS. Mg(2+)-binding residues include Asp-48 and Asp-52. Gln-165 contributes to the (2E,6E)-farnesyl diphosphate binding site. Residue Asn-168 coordinates Mg(2+). Arg-171 lines the (2E,6E)-farnesyl diphosphate pocket. Asp-172 contacts Mg(2+). Tyr-248 is a binding site for (2E,6E)-farnesyl diphosphate.

This sequence belongs to the phytoene/squalene synthase family. CrtM subfamily. The cofactor is Mg(2+).

It catalyses the reaction 2 (2E,6E)-farnesyl diphosphate = 15-cis-4,4'-diapophytoene + 2 diphosphate. It participates in carotenoid biosynthesis; staphyloxanthin biosynthesis; staphyloxanthin from farnesyl diphosphate: step 1/5. Its function is as follows. Involved in the biosynthesis of the yellow-orange carotenoid staphyloxanthin, which plays a role in the virulence via its protective function against oxidative stress. Catalyzes the head-to-head condensation of two molecules of farnesyl diphosphate (FPP) into the colorless C(30) carotenoid 4,4'-diapophytoene (dehydrosqualene). The chain is 4,4'-diapophytoene synthase from Staphylococcus aureus (strain NCTC 8325 / PS 47).